A 369-amino-acid chain; its full sequence is Glutamate 5-kinase (369 aa).

Lys-9 lines the ATP pocket. The substrate site is built by Ser-49, Asp-136, and Asn-148. Residues 168–169 and 210–216 each bind ATP; these read TD and TGGMLTK. Positions 275–355 constitute a PUA domain; the sequence is RGGVYVDEGA…KGVFIHRDDW (81 aa).

Belongs to the glutamate 5-kinase family.

The protein resides in the cytoplasm. The catalysed reaction is L-glutamate + ATP = L-glutamyl 5-phosphate + ADP. The protein operates within amino-acid biosynthesis; L-proline biosynthesis; L-glutamate 5-semialdehyde from L-glutamate: step 1/2. In terms of biological role, catalyzes the transfer of a phosphate group to glutamate to form L-glutamate 5-phosphate. The polypeptide is Glutamate 5-kinase (Neisseria meningitidis serogroup A / serotype 4A (strain DSM 15465 / Z2491)).